We begin with the raw amino-acid sequence, 555 residues long: Potassium-transporting ATPase potassium-binding subunit (555 aa).

10 consecutive transmembrane segments (helical) span residues 2–22 (IWVA…PTGI), 60–80 (QYAL…YFIF), 130–150 (IGIT…VMAF), 173–193 (VFLP…VPQT), 246–266 (MSNI…PFTY), 278–298 (ILFV…TTSE), 374–394 (AGFV…GLMV), 412–432 (LIAV…ALAL), 483–503 (LVMF…AASL), and 525–545 (GIFI…MLVL).

Belongs to the KdpA family. As to quaternary structure, the system is composed of three essential subunits: KdpA, KdpB and KdpC.

The protein resides in the cell membrane. Part of the high-affinity ATP-driven potassium transport (or Kdp) system, which catalyzes the hydrolysis of ATP coupled with the electrogenic transport of potassium into the cytoplasm. This subunit binds the extracellular potassium ions and delivers the ions to the membrane domain of KdpB through an intramembrane tunnel. The protein is Potassium-transporting ATPase potassium-binding subunit of Bacillus cereus (strain Q1).